The chain runs to 583 residues: Mitogen-activated protein kinase 4 (583 aa).

A Protein kinase domain is found at 20 to 312 (FIDFQPLGFG…AEMGLQHPYM (293 aa)). ATP is bound by residues 26 to 34 (LGFGVNGLV) and lysine 49. Aspartate 149 acts as the Proton acceptor in catalysis. A Phosphoserine; by PAK1, PAK2 and PAK3 modification is found at serine 186. The SEG motif motif lies at 186–188 (SEG). Residues 328–333 (FRIEDE) carry the FRIEDE motif motif. 2 stretches are compositionally biased toward basic and acidic residues: residues 366-379 (DRCQ…RDPR) and 391-410 (VDPR…QSHS). The segment at 366-410 (DRCQDASEVQRDPRAGSTPLAEDVQVDPRKDSQSSSERFLEQSHS) is disordered. Position 430 is a phosphoserine (serine 430). Residues 495–531 (STQSGSERASPPPDAPEPRLSASPPGHPTPIDGGASP) form a disordered region.

Belongs to the protein kinase superfamily. CMGC Ser/Thr protein kinase family. MAP kinase subfamily. As to quaternary structure, homodimer. Heterodimer with ERK3/MAPK6. Interacts with (via FRIEDE motif) MAPKAPK5. Mg(2+) serves as cofactor. Post-translationally, phosphorylated at Ser-186 by PAK1, PAK2 and PAK3 resulting in catalytic activation. Phosphorylated by MAPKAPK5 at other sites.

The protein resides in the cytoplasm. It localises to the nucleus. It carries out the reaction L-seryl-[protein] + ATP = O-phospho-L-seryl-[protein] + ADP + H(+). It catalyses the reaction L-threonyl-[protein] + ATP = O-phospho-L-threonyl-[protein] + ADP + H(+). Activated by phosphorylation at Ser-186. Its function is as follows. Atypical MAPK protein. Phosphorylates microtubule-associated protein 2 (MAP2) and MAPKAPK5. The precise role of the complex formed with MAPKAPK5 is still unclear, but the complex follows a complex set of phosphorylation events: upon interaction with atypical MAPKAPK5, ERK4/MAPK4 is phosphorylated at Ser-186 and then mediates phosphorylation and activation of MAPKAPK5, which in turn phosphorylates ERK4/MAPK4. May promote entry in the cell cycle. The chain is Mitogen-activated protein kinase 4 (Mapk4) from Mus musculus (Mouse).